The following is a 182-amino-acid chain: ATP-dependent protease subunit HslV (182 aa).

Thr-6 is a catalytic residue. The Na(+) site is built by Ala-164, Cys-167, and Thr-170.

It belongs to the peptidase T1B family. HslV subfamily. In terms of assembly, a double ring-shaped homohexamer of HslV is capped on each side by a ring-shaped HslU homohexamer. The assembly of the HslU/HslV complex is dependent on binding of ATP.

Its subcellular location is the cytoplasm. The enzyme catalyses ATP-dependent cleavage of peptide bonds with broad specificity.. Its activity is regulated as follows. Allosterically activated by HslU binding. Protease subunit of a proteasome-like degradation complex believed to be a general protein degrading machinery. The sequence is that of ATP-dependent protease subunit HslV from Borrelia garinii subsp. bavariensis (strain ATCC BAA-2496 / DSM 23469 / PBi) (Borreliella bavariensis).